A 150-amino-acid polypeptide reads, in one-letter code: MQIILLEKVANLGNLGDIVKVKDGYARNFLIPNRKARRATKEAIAEFEVRRAELEKIAAEKLAASQAVGEKLNGQSFEITQKSGVDGRLFGSVTNADVAELLKKAGFDVEKSQVRMPEGPLKMIGEHGVQVALHTDVVVDVTINVIGDHA.

This sequence belongs to the bacterial ribosomal protein bL9 family.

Its function is as follows. Binds to the 23S rRNA. The polypeptide is Large ribosomal subunit protein bL9 (Burkholderia multivorans (strain ATCC 17616 / 249)).